An 892-amino-acid chain; its full sequence is Translation initiation factor IF-2 (892 aa).

Residues 88 to 304 form a disordered region; the sequence is KKRTFVKRDP…SSLQQGFQKP (217 aa). 2 stretches are compositionally biased toward basic and acidic residues: residues 93–159 and 166–216; these read VKRD…KDKV and DMTK…EENK. Residues 254 to 269 are compositionally biased toward basic residues; that stretch reads GRGRNAKAARPAKKGK. Over residues 270–282 the composition is skewed to basic and acidic residues; sequence HAESKADREEARA. The tr-type G domain maps to 391–560; it reads PRAPVVTIMG…LLQAEVLELK (170 aa). Residues 400–407 form a G1 region; sequence GHVDHGKT. Residue 400–407 participates in GTP binding; the sequence is GHVDHGKT. Positions 425 to 429 are G2; sequence GITQH. A G3 region spans residues 446-449; sequence DTPG. Residues 446–450 and 500–503 each bind GTP; these read DTPGH and NKID. Positions 500–503 are G4; that stretch reads NKID. Residues 536–538 are G5; the sequence is SAK.

Belongs to the TRAFAC class translation factor GTPase superfamily. Classic translation factor GTPase family. IF-2 subfamily.

Its subcellular location is the cytoplasm. In terms of biological role, one of the essential components for the initiation of protein synthesis. Protects formylmethionyl-tRNA from spontaneous hydrolysis and promotes its binding to the 30S ribosomal subunits. Also involved in the hydrolysis of GTP during the formation of the 70S ribosomal complex. The polypeptide is Translation initiation factor IF-2 (Salmonella choleraesuis (strain SC-B67)).